The primary structure comprises 94 residues: Large ribosomal subunit protein bL25 (94 aa).

The protein belongs to the bacterial ribosomal protein bL25 family. As to quaternary structure, part of the 50S ribosomal subunit; part of the 5S rRNA/L5/L18/L25 subcomplex. Contacts the 5S rRNA. Binds to the 5S rRNA independently of L5 and L18.

In terms of biological role, this is one of the proteins that binds to the 5S RNA in the ribosome where it forms part of the central protuberance. The sequence is that of Large ribosomal subunit protein bL25 from Escherichia coli O6:K15:H31 (strain 536 / UPEC).